A 174-amino-acid polypeptide reads, in one-letter code: Protein C2-DOMAIN ABA-RELATED 6 (174 aa).

The 115-residue stretch at 1–115 folds into the C2 domain; that stretch reads MEKTEEEVEM…HKLGLKELPH (115 aa). Residues arginine 30, aspartate 31, aspartate 36, aspartate 82, lysine 83, aspartate 84, and aspartate 90 each contribute to the Ca(2+) site.

It belongs to the plant CAR protein family. As to quaternary structure, binds to PYR/PYL/RCAR abscisic acid intracellular receptors in an ABA-independent manner, both at the plasma membrane and in the nucleus. Subunit of a complex made of CAR6, PHOT1 and RPT3/NPH3. Interacts directly with RPT3/NPH3.

The protein localises to the cell membrane. It is found in the nucleus. Stimulates the GTPase/ATPase activities of Obg-like ATPases. Mediates the transient calcium-dependent interaction of PYR/PYL/RCAR abscisic acid (ABA) receptors with the plasma membrane and thus regulates ABA sensitivity. Prevents hypocotyl bending as well as gravitropic response under blue light conditions. In Arabidopsis thaliana (Mouse-ear cress), this protein is Protein C2-DOMAIN ABA-RELATED 6.